The sequence spans 213 residues: Retinitis pigmentosa 9 protein homolog (213 aa).

The disordered stretch occupies residues 1–61 (MSSGAGSRRP…IKEDETKPED (61 aa)). A PIM1-binding region spans residues 1–147 (MSSGAGSRRP…RENKRHEKDV (147 aa)). Basic and acidic residues-rich tracts occupy residues 9 to 21 (RPREPPEHELQRR) and 52 to 61 (IKEDETKPED). Residues 96-114 (QCWRCKRYGHRTGDKECPF) form a CCHC-type zinc finger. Residue K121 forms a Glycyl lysine isopeptide (Lys-Gly) (interchain with G-Cter in SUMO2) linkage. Residues 154–213 (QLLEDSTSDDDGSSSSSSGDREKRKKRKKKEKHKKRKKEKKKKKKRKHKASKSSESSDSE) form a disordered region. Positions 176–204 (KRKKRKKKEKHKKRKKEKKKKKKRKHKAS) are enriched in basic residues. Phosphoserine; by PIM1; in vitro occurs at positions 204 and 206.

In terms of assembly, binds to PIM1. Binds to ZNHIT4. In terms of tissue distribution, highly expressed in the testis, moderately in the kidney, liver and spleen, and weakly in the skeletal muscle and heart.

It localises to the nucleus. Functionally, is thought to be a target protein for the PIM1 kinase. May play some roles in B-cell proliferation in association with PIM1. This is Retinitis pigmentosa 9 protein homolog (rp9) from Mus musculus (Mouse).